A 169-amino-acid chain; its full sequence is Large ribosomal subunit protein uL10 (169 aa).

The protein belongs to the universal ribosomal protein uL10 family. As to quaternary structure, part of the ribosomal stalk of the 50S ribosomal subunit. The N-terminus interacts with L11 and the large rRNA to form the base of the stalk. The C-terminus forms an elongated spine to which L12 dimers bind in a sequential fashion forming a multimeric L10(L12)X complex.

In terms of biological role, forms part of the ribosomal stalk, playing a central role in the interaction of the ribosome with GTP-bound translation factors. In Deinococcus geothermalis (strain DSM 11300 / CIP 105573 / AG-3a), this protein is Large ribosomal subunit protein uL10.